The sequence spans 475 residues: 3-isopropylmalate dehydratase large subunit (475 aa).

[4Fe-4S] cluster-binding residues include Cys353, Cys414, and Cys417.

Belongs to the aconitase/IPM isomerase family. LeuC type 1 subfamily. In terms of assembly, heterodimer of LeuC and LeuD. Requires [4Fe-4S] cluster as cofactor.

It catalyses the reaction (2R,3S)-3-isopropylmalate = (2S)-2-isopropylmalate. It functions in the pathway amino-acid biosynthesis; L-leucine biosynthesis; L-leucine from 3-methyl-2-oxobutanoate: step 2/4. Its function is as follows. Catalyzes the isomerization between 2-isopropylmalate and 3-isopropylmalate, via the formation of 2-isopropylmaleate. The sequence is that of 3-isopropylmalate dehydratase large subunit from Stutzerimonas stutzeri (strain A1501) (Pseudomonas stutzeri).